Reading from the N-terminus, the 144-residue chain is Bacilliredoxin SH1478 (144 aa).

This sequence belongs to the bacilliredoxin family.

The sequence is that of Bacilliredoxin SH1478 from Staphylococcus haemolyticus (strain JCSC1435).